We begin with the raw amino-acid sequence, 307 residues long: MGLSISFLSIIMMMCLLFPDLNVVVKSATTEYTTLIYKGCARQQFSDPSGLYSQALSAMFGSLVSQSTKTRFYKTTTGTSTTTITGLFQCRGDLSNHDCYNCVSRLPVLSDKLCGKTIASRVQLSGCYLLYEVSGFSQISGMEMLFKTCGKNNIAGTGFEERRDTAFGVMQNGVVSGHGFYATTYESVYVLGQCEGDVGDTDCSGCVKNALEKAQVECGSSISGQIYLHKCFIAYSYYPNGVPRRSSSSSSSSSSSSSGSSNSDPSTSTGATGKTVAIIVGGAAGVGFLVICLLFAKNLMRKKHDDY.

The N-terminal stretch at 1 to 23 (MGLSISFLSIIMMMCLLFPDLNV) is a signal peptide. The Extracellular segment spans residues 24–275 (VVKSATTEYT…STSTGATGKT (252 aa)). Gnk2-homologous domains are found at residues 33–136 (TTLI…VSGF) and 141–240 (GMEM…YYPN). Disulfide bonds link cysteine 40–cysteine 114, cysteine 90–cysteine 99, cysteine 102–cysteine 127, cysteine 149–cysteine 218, cysteine 194–cysteine 203, and cysteine 206–cysteine 231. Low complexity predominate over residues 246–268 (SSSSSSSSSSSSSGSSNSDPSTS). A disordered region spans residues 246–270 (SSSSSSSSSSSSSGSSNSDPSTSTG). A helical membrane pass occupies residues 276-296 (VAIIVGGAAGVGFLVICLLFA). Positions 276 to 296 (VAIIVGGAAGVGFLVICLLFA) are necessary and sufficient for plasmodesmal targeting. At 297–307 (KNLMRKKHDDY) the chain is on the cytoplasmic side.

This sequence belongs to the cysteine-rich repeat secretory protein family. Plasmodesmata-located proteins (PDLD) subfamily. In terms of assembly, (Microbial infection) Interacts with Grapevine fanleaf virus (GFLV) 2B-MP. In terms of tissue distribution, highly expressed in inflorescence shoot apex. Uniformly expressed within the inflorescence meristem with the exception of a boundary zone between floral primordia and the meristem where the expression is weaker (at protein level).

The protein resides in the cell membrane. The protein localises to the cell junction. It localises to the plasmodesma. Its function is as follows. Modulates cell-to-cell trafficking. The chain is Plasmodesmata-located protein 2 from Arabidopsis thaliana (Mouse-ear cress).